Reading from the N-terminus, the 231-residue chain is Cytidylate kinase (231 aa).

Position 16–24 (Gly16–Thr24) interacts with ATP. Residues Pro176–Glu205 are disordered. The span at Glu184 to Glu205 shows a compositional bias: basic and acidic residues.

It belongs to the cytidylate kinase family. Type 1 subfamily.

Its subcellular location is the cytoplasm. It catalyses the reaction CMP + ATP = CDP + ADP. The catalysed reaction is dCMP + ATP = dCDP + ADP. In Pelodictyon phaeoclathratiforme (strain DSM 5477 / BU-1), this protein is Cytidylate kinase.